The chain runs to 83 residues: Mitochondrial import inner membrane translocase subunit Tim8 (83 aa).

A Twin CX3C motif motif is present at residues 35–60; the sequence is CWDVCFSDYRPPSKMDGKTQTCIQNC. 2 disulfides stabilise this stretch: C35–C60 and C39–C56.

Belongs to the small Tim family. In terms of assembly, heterohexamer; composed of 3 copies of ddp-1/tim-8 and 3 copies of tin-13/tim-13, named soluble 70 kDa complex. Associates with the TIM22 complex, whose core is composed of tim-22.

It is found in the mitochondrion inner membrane. Functionally, mitochondrial intermembrane chaperone that participates in the import and insertion of some multi-pass transmembrane proteins into the mitochondrial inner membrane. Also required for the transfer of beta-barrel precursors from the TOM complex to the sorting and assembly machinery (SAM complex) of the outer membrane. Acts as a chaperone-like protein that protects the hydrophobic precursors from aggregation and guide them through the mitochondrial intermembrane space. The ddp-1/tim-8-tim-13 complex mediates the import of some proteins while the predominant tim-9/tin-9.1-tim-10/tin-10 70 kDa complex mediates the import of much more proteins. In Caenorhabditis briggsae, this protein is Mitochondrial import inner membrane translocase subunit Tim8.